Here is a 179-residue protein sequence, read N- to C-terminus: Replication restart protein DnaT (179 aa).

The segment at G156–G179 is disordered.

The protein belongs to the DnaT family. In terms of assembly, homooligomerizes. Interacts with PriB. Component of the replication restart primosome. Primosome assembly occurs via a 'hand-off' mechanism. PriA binds to replication forks, subsequently PriB then DnaT bind; DnaT then displaces ssDNA to generate the helicase loading substrate.

Its function is as follows. Involved in the restart of stalled replication forks, which reloads the replicative helicase on sites other than the origin of replication. Can function in multiple replication restart pathways. Displaces ssDNA from a PriB-ssDNA complex. Probably forms a spiral filament on ssDNA. This chain is Replication restart protein DnaT, found in Escherichia coli O157:H7.